We begin with the raw amino-acid sequence, 273 residues long: Coiled-coil domain-containing protein 3 (273 aa).

An N-terminal signal peptide occupies residues 1-21; sequence MPLPLLLAALCLAASPAPARA. An N-linked (GlcNAc...) asparagine glycan is attached at Asn100. A coiled-coil region spans residues 188-250; that stretch reads SVQKALFEEE…VNQKLNEKLG (63 aa).

In terms of assembly, homodimer. N-glycosylated. Expressed in aorta and adipose tissue. Enriched in mature adipocytes. Over-expressed in adipose tissue from either hormonally-induced or nutritionally-regulated obese mice models.

Its subcellular location is the secreted. In terms of biological role, negatively regulates TNF-alpha-induced pro-inflammatory response in endothelial cells (ECs) via inhibition of TNF-alpha-induced NF-kappaB activation in ECs. Positively regulates lipid accumulation in adipose cells. The sequence is that of Coiled-coil domain-containing protein 3 (Ccdc3) from Mus musculus (Mouse).